A 690-amino-acid chain; its full sequence is Eukaryotic translation initiation factor 3 subunit B (690 aa).

Residues 1–11 (MAKKKSEEHSG) show a composition bias toward basic and acidic residues. Residues 1–36 (MAKKKSEEHSGADANDSDYQEEPNFEDPPGFVDNIS) form a disordered region. The span at 15 to 25 (NDSDYQEEPNF) shows a compositional bias: acidic residues. The RRM domain maps to 57-141 (SVVVVDNIPK…HTFAVNLFTD (85 aa)). 5 WD repeats span residues 207–246 (TRER…KIQK), 293–331 (DGMS…LLDL), 334–369 (IKIP…TLME), 442–484 (EIRE…KPSL), and 530–575 (PDHF…IKRT). A coiled-coil region spans residues 595–645 (EEKQKEIKKNLKKYYAAFEQKDRLRLTRASKELLEKRSQLRETFMEYRNKR).

The protein belongs to the eIF-3 subunit B family. In terms of assembly, component of the eukaryotic translation initiation factor 3 (eIF-3) complex. The eIF-3 complex interacts with pix. Interacts with mxt.

The protein resides in the cytoplasm. RNA-binding component of the eukaryotic translation initiation factor 3 (eIF-3) complex, which is involved in protein synthesis of a specialized repertoire of mRNAs and, together with other initiation factors, stimulates binding of mRNA and methionyl-tRNAi to the 40S ribosome. The eIF-3 complex specifically targets and initiates translation of a subset of mRNAs involved in cell proliferation. This chain is Eukaryotic translation initiation factor 3 subunit B, found in Drosophila erecta (Fruit fly).